The chain runs to 344 residues: uncharacterized protein (344 aa).

A run of 5 helical transmembrane segments spans residues 53-73 (FVVG…VSVW), 84-104 (WPIL…GYNI), 153-173 (IYPL…LYLL), 189-209 (FGAW…LEML), and 275-295 (IASE…VGVF).

This sequence belongs to the steroid 5-alpha reductase family.

The protein resides in the endoplasmic reticulum membrane. This is an uncharacterized protein from Schizosaccharomyces pombe (strain 972 / ATCC 24843) (Fission yeast).